The chain runs to 350 residues: ATPase GET3 (350 aa).

ATP is bound at residue 26–33 (KGGVGKTT). Asp-57 is an active-site residue. Residues Glu-241 and Asn-268 each coordinate ATP. Zn(2+) contacts are provided by Cys-281 and Cys-284.

This sequence belongs to the arsA ATPase family. In terms of assembly, homodimer. Component of the Golgi to ER traffic (GET) complex, which is composed of GET1, GET2 and GET3. Within the complex, GET1 and GET2 form a heterotetramer which is stabilized by phosphatidylinositol binding and which binds to the GET3 homodimer. Interacts with the chloride channel protein GEF1.

The protein resides in the cytoplasm. It is found in the endoplasmic reticulum. Its subcellular location is the golgi apparatus. Functionally, ATPase required for the post-translational delivery of tail-anchored (TA) proteins to the endoplasmic reticulum. Recognizes and selectively binds the transmembrane domain of TA proteins in the cytosol. This complex then targets to the endoplasmic reticulum by membrane-bound receptors GET1 and GET2, where the tail-anchored protein is released for insertion. This process is regulated by ATP binding and hydrolysis. ATP binding drives the homodimer towards the closed dimer state, facilitating recognition of newly synthesized TA membrane proteins. ATP hydrolysis is required for insertion. Subsequently, the homodimer reverts towards the open dimer state, lowering its affinity for the GET1-GET2 receptor, and returning it to the cytosol to initiate a new round of targeting. Cooperates with the HDEL receptor ERD2 to mediate the ATP-dependent retrieval of resident ER proteins that contain a C-terminal H-D-E-L retention signal from the Golgi to the ER. Involved in low-level resistance to the oxyanions arsenite and arsenate, and in heat tolerance. The polypeptide is ATPase GET3 (Candida glabrata (strain ATCC 2001 / BCRC 20586 / JCM 3761 / NBRC 0622 / NRRL Y-65 / CBS 138) (Yeast)).